The sequence spans 503 residues: Probable cytosol aminopeptidase (503 aa).

Residues Lys268 and Asp273 each coordinate Mn(2+). The active site involves Lys280. Positions 291, 350, and 352 each coordinate Mn(2+). Residue Arg354 is part of the active site.

It belongs to the peptidase M17 family. It depends on Mn(2+) as a cofactor.

It localises to the cytoplasm. The catalysed reaction is Release of an N-terminal amino acid, Xaa-|-Yaa-, in which Xaa is preferably Leu, but may be other amino acids including Pro although not Arg or Lys, and Yaa may be Pro. Amino acid amides and methyl esters are also readily hydrolyzed, but rates on arylamides are exceedingly low.. It carries out the reaction Release of an N-terminal amino acid, preferentially leucine, but not glutamic or aspartic acids.. In terms of biological role, presumably involved in the processing and regular turnover of intracellular proteins. Catalyzes the removal of unsubstituted N-terminal amino acids from various peptides. The sequence is that of Probable cytosol aminopeptidase from Methylobacterium radiotolerans (strain ATCC 27329 / DSM 1819 / JCM 2831 / NBRC 15690 / NCIMB 10815 / 0-1).